Here is a 209-residue protein sequence, read N- to C-terminus: Uracil phosphoribosyltransferase (209 aa).

5-phospho-alpha-D-ribose 1-diphosphate-binding positions include Arg79, Arg104, and 131–139 (DPMLATGNS). Uracil is bound by residues Ile194 and 199–201 (GDA). Residue Asp200 participates in 5-phospho-alpha-D-ribose 1-diphosphate binding.

This sequence belongs to the UPRTase family. Requires Mg(2+) as cofactor.

The enzyme catalyses UMP + diphosphate = 5-phospho-alpha-D-ribose 1-diphosphate + uracil. The protein operates within pyrimidine metabolism; UMP biosynthesis via salvage pathway; UMP from uracil: step 1/1. Allosterically activated by GTP. Catalyzes the conversion of uracil and 5-phospho-alpha-D-ribose 1-diphosphate (PRPP) to UMP and diphosphate. This is Uracil phosphoribosyltransferase from Rhizobium meliloti (strain 1021) (Ensifer meliloti).